The chain runs to 465 residues: Ribulose bisphosphate carboxylase large chain (465 aa).

N6,N6,N6-trimethyllysine is present on lysine 4. Asparagine 113 and threonine 163 together coordinate substrate. Residue lysine 165 is the Proton acceptor of the active site. Residue lysine 167 coordinates substrate. Positions 191, 193, and 194 each coordinate Mg(2+). N6-carboxylysine is present on lysine 191. Histidine 284 serves as the catalytic Proton acceptor. Positions 285, 317, and 369 each coordinate substrate.

This sequence belongs to the RuBisCO large chain family. Type I subfamily. In terms of assembly, heterohexadecamer of 8 large chains and 8 small chains; disulfide-linked. The disulfide link is formed within the large subunit homodimers. Mg(2+) is required as a cofactor. Post-translationally, the disulfide bond which can form in the large chain dimeric partners within the hexadecamer appears to be associated with oxidative stress and protein turnover.

Its subcellular location is the plastid. The protein resides in the chloroplast. It carries out the reaction 2 (2R)-3-phosphoglycerate + 2 H(+) = D-ribulose 1,5-bisphosphate + CO2 + H2O. It catalyses the reaction D-ribulose 1,5-bisphosphate + O2 = 2-phosphoglycolate + (2R)-3-phosphoglycerate + 2 H(+). RuBisCO catalyzes two reactions: the carboxylation of D-ribulose 1,5-bisphosphate, the primary event in carbon dioxide fixation, as well as the oxidative fragmentation of the pentose substrate in the photorespiration process. Both reactions occur simultaneously and in competition at the same active site. This chain is Ribulose bisphosphate carboxylase large chain, found in Idesia polycarpa (Iigiri tree).